Reading from the N-terminus, the 185-residue chain is MNNETIKKAQDNMDKSIKVYQKRLASIRAGVANAALLDNVQVEYYGAPTPLTQMSSITIPEPRVLLITPYDQNSLDDIEHALLASNLGLTPANDGKVIRLVIPQLTGERREEIAKEVGKYAEDAKIAVRNVRREAMDALKKEQKDGNITEDEQRNLEKQVQKITDDSTKKIDQLADEKRKEITQG.

Residues 140–168 are disordered; the sequence is KKEQKDGNITEDEQRNLEKQVQKITDDST.

Belongs to the RRF family.

It localises to the cytoplasm. Responsible for the release of ribosomes from messenger RNA at the termination of protein biosynthesis. May increase the efficiency of translation by recycling ribosomes from one round of translation to another. This chain is Ribosome-recycling factor, found in Lactobacillus helveticus (strain DPC 4571).